A 109-amino-acid polypeptide reads, in one-letter code: Phosphoribosyl-ATP pyrophosphatase (109 aa).

This sequence belongs to the PRA-PH family.

Its subcellular location is the cytoplasm. The enzyme catalyses 1-(5-phospho-beta-D-ribosyl)-ATP + H2O = 1-(5-phospho-beta-D-ribosyl)-5'-AMP + diphosphate + H(+). The protein operates within amino-acid biosynthesis; L-histidine biosynthesis; L-histidine from 5-phospho-alpha-D-ribose 1-diphosphate: step 2/9. The chain is Phosphoribosyl-ATP pyrophosphatase from Azorhizobium caulinodans (strain ATCC 43989 / DSM 5975 / JCM 20966 / LMG 6465 / NBRC 14845 / NCIMB 13405 / ORS 571).